The chain runs to 286 residues: Urease accessory protein UreD 2 (286 aa).

This sequence belongs to the UreD family. UreD, UreF and UreG form a complex that acts as a GTP-hydrolysis-dependent molecular chaperone, activating the urease apoprotein by helping to assemble the nickel containing metallocenter of UreC. The UreE protein probably delivers the nickel.

Its subcellular location is the cytoplasm. Required for maturation of urease via the functional incorporation of the urease nickel metallocenter. The polypeptide is Urease accessory protein UreD 2 (Bradyrhizobium sp. (strain BTAi1 / ATCC BAA-1182)).